The primary structure comprises 109 residues: uncharacterized protein (109 aa).

A helical transmembrane segment spans residues Ser82 to Thr102.

It is found in the membrane. This is an uncharacterized protein from Saccharomyces cerevisiae (strain ATCC 204508 / S288c) (Baker's yeast).